The primary structure comprises 182 residues: ATP-dependent protease subunit HslV (182 aa).

Threonine 12 is an active-site residue. Na(+) is bound by residues alanine 167, cysteine 170, and threonine 173.

It belongs to the peptidase T1B family. HslV subfamily. In terms of assembly, a double ring-shaped homohexamer of HslV is capped on each side by a ring-shaped HslU homohexamer. The assembly of the HslU/HslV complex is dependent on binding of ATP.

Its subcellular location is the cytoplasm. The enzyme catalyses ATP-dependent cleavage of peptide bonds with broad specificity.. Its activity is regulated as follows. Allosterically activated by HslU binding. Functionally, protease subunit of a proteasome-like degradation complex believed to be a general protein degrading machinery. This Chlorobium phaeovibrioides (strain DSM 265 / 1930) (Prosthecochloris vibrioformis (strain DSM 265)) protein is ATP-dependent protease subunit HslV.